The sequence spans 354 residues: MSAGGGRAFAWQVFPPMPTCRVYGTVAHQDEHLLVLGGCGRAGLPLDTAETLDMASHTWLALAPLPTARAGAAAVVLGKQVLVVGGVDEVQSPVAAVEAFLMDEGRWERRATLPQAAMGVATVERDGMVYALGGMGPDTAPQAQVRVYEPRRDCWLSLPSMPTPCYGASTFLHGNKIYVLGGRQGKLPVTAFEAFDLEARTWTRHPSLPSRRAFAGCAMAEGSVFSLGGLQQPGPHNFYSRPHFVNTVEMFDLEHGSWTKLPRSLRMRDKRADFVVGSLGGHIVAIGGLGNQPCPLGSVESFSLARRRWEALPAMPTARCSCSSLQAGPRLFVIGGVAQGPSQAVEALCLRDGV.

Kelch repeat units lie at residues 1–31 (MSAG…HQDE), 32–79 (HLLV…VLGK), 81–127 (VLVV…ERDG), 128–175 (MVYA…LHGN), 176–222 (KIYV…MAEG), 224–281 (VFSL…SLGG), 282–329 (HIVA…QAGP), and 331–354 (LFVI…RDGV).

It is found in the cytoplasm. It localises to the midbody. In terms of biological role, involved in pinching off the separated nuclei at the cleavage furrow and in cytokinesis. Required for mitotic integrity and maintenance of chromosomal stability. Protects cells against mitotic errors, centrosomal amplification, micronucleus formation and aneuploidy. Plays a key role of midbody function involving abscission of the daughter cells during cytokinesis and appropriate chromosomal and nuclear segregation into the daughter cells. This chain is Kelch domain-containing protein 8B (KLHDC8B), found in Pongo abelii (Sumatran orangutan).